Reading from the N-terminus, the 397-residue chain is Phosphoglycerate kinase (397 aa).

Substrate-binding positions include 21-23 (DFN), R37, 60-63 (HLGR), R119, and R152. ATP contacts are provided by residues K203, G294, E325, and 354-357 (GGDS).

This sequence belongs to the phosphoglycerate kinase family. As to quaternary structure, monomer.

Its subcellular location is the cytoplasm. It carries out the reaction (2R)-3-phosphoglycerate + ATP = (2R)-3-phospho-glyceroyl phosphate + ADP. It functions in the pathway carbohydrate degradation; glycolysis; pyruvate from D-glyceraldehyde 3-phosphate: step 2/5. This chain is Phosphoglycerate kinase, found in Chlorobium phaeovibrioides (strain DSM 265 / 1930) (Prosthecochloris vibrioformis (strain DSM 265)).